Reading from the N-terminus, the 289-residue chain is UPF0725 protein At1g27860 (289 aa).

Residues 266–289 (DQQRSMTLPSGEQAESSKKRPRLS) form a disordered region. Polar residues predominate over residues 268–279 (QRSMTLPSGEQA).

Belongs to the UPF0725 (EMB2204) family.

This Arabidopsis thaliana (Mouse-ear cress) protein is UPF0725 protein At1g27860.